The following is a 260-amino-acid chain: Glucosamine-6-phosphate deaminase (260 aa).

Asp-67 (proton acceptor; for enolization step) is an active-site residue. Asp-136 (for ring-opening step) is an active-site residue. The active-site Proton acceptor; for ring-opening step is the His-138. The active-site For ring-opening step is the Glu-143.

This sequence belongs to the glucosamine/galactosamine-6-phosphate isomerase family. NagB subfamily.

It carries out the reaction alpha-D-glucosamine 6-phosphate + H2O = beta-D-fructose 6-phosphate + NH4(+). The protein operates within amino-sugar metabolism; N-acetylneuraminate degradation; D-fructose 6-phosphate from N-acetylneuraminate: step 5/5. Its function is as follows. Catalyzes the reversible isomerization-deamination of glucosamine 6-phosphate (GlcN6P) to form fructose 6-phosphate (Fru6P) and ammonium ion. In Arthrobacter sp. (strain FB24), this protein is Glucosamine-6-phosphate deaminase.